Here is a 497-residue protein sequence, read N- to C-terminus: Cytochrome P450 3A18 (497 aa).

A heme-binding site is contributed by C442.

It belongs to the cytochrome P450 family. Heme is required as a cofactor.

The protein localises to the endoplasmic reticulum membrane. The protein resides in the microsome membrane. It catalyses the reaction an organic molecule + reduced [NADPH--hemoprotein reductase] + O2 = an alcohol + oxidized [NADPH--hemoprotein reductase] + H2O + H(+). In terms of biological role, catalyzes 16-beta- and 6-alpha-hydroxylations of testosterone. This is Cytochrome P450 3A18 (Cyp3a18) from Rattus norvegicus (Rat).